A 157-amino-acid polypeptide reads, in one-letter code: Iron-sulfur cluster repair protein DnrN (157 aa).

Belongs to the RIC family.

The protein resides in the cytoplasm. Functionally, di-iron-containing protein involved in the repair of iron-sulfur clusters damaged by oxidative and nitrosative stress conditions. Required to repair damage caused by nitric oxide to FNR and NsrR transcription factors. The chain is Iron-sulfur cluster repair protein DnrN (dnrN) from Neisseria gonorrhoeae.